A 383-amino-acid polypeptide reads, in one-letter code: Protein pelota homolog (383 aa).

Belongs to the eukaryotic release factor 1 family. Pelota subfamily. Component of the Pelota-HBS1L complex, also named Dom34-Hbs1 complex, composed of PELO and HBS1L. Requires a divalent metal cation as cofactor.

The protein resides in the cytoplasm. Component of the Pelota-HBS1L complex, a complex that recognizes stalled ribosomes and triggers the No-Go Decay (NGD) pathway. In the Pelota-HBS1L complex, PELO recognizes ribosomes stalled at the 3' end of an mRNA and engages stalled ribosomes by destabilizing mRNA in the mRNA channel. Following mRNA extraction from stalled ribosomes by the SKI complex, the Pelota-HBS1L complex promotes recruitment of ABCE1, which drives the disassembly of stalled ribosomes, followed by degradation of damaged mRNAs as part of the NGD pathway. This is Protein pelota homolog (pelo) from Xenopus laevis (African clawed frog).